The chain runs to 345 residues: Heat stress transcription factor A-4c (345 aa).

A DNA-binding region spans residues L11 to P105. The hydrophobic repeat HR-A/B stretch occupies residues P119–L185. The short motif at R199–R203 is the Nuclear localization signal element. The AHA1 signature appears at L226–E235. Residues S240 to T329 form a disordered region. The segment covering P274–P283 has biased composition (low complexity). The short motif at D289–E298 is the AHA2 element. Polar residues-rich tracts occupy residues L296 to V308 and N317 to T329.

It belongs to the HSF family. Class A subfamily. In terms of assembly, homotrimer. Exhibits temperature-dependent phosphorylation. In terms of tissue distribution, expressed in roots, seedlings and at lower levels in leaves.

Its subcellular location is the nucleus. In terms of biological role, transcriptional activator that specifically binds DNA sequence 5'-AGAAnnTTCT-3' known as heat shock promoter elements (HSE). May be involved in general response to auxin. The chain is Heat stress transcription factor A-4c (HSFA4C) from Arabidopsis thaliana (Mouse-ear cress).